The sequence spans 163 residues: MPSFDVVSKVDLQEVDNVVNNVKKEVDTRYDFRGSNTELSFDKGGASISILASDDMKMRAVQEMLLANCVRRKVDPKFLDFGKVEAASKGMVKRSVAVKDGISKETAQKIVKKIKASKLKVQAAIQDDQVRVTGKKIDDLQDVIQLLRDDDFGVPLQFINMRS.

It belongs to the YajQ family.

Functionally, nucleotide-binding protein. In Oleidesulfovibrio alaskensis (strain ATCC BAA-1058 / DSM 17464 / G20) (Desulfovibrio alaskensis), this protein is Nucleotide-binding protein Dde_2479.